A 279-amino-acid chain; its full sequence is Reaction center protein L chain (279 aa).

3 helical membrane-spanning segments follow: residues 33-56 (GFFG…GASQ), 85-113 (GLWQ…RKLG), and 116-141 (YHVP…ILMG). Positions 154 and 174 each coordinate (7R,8Z)-bacteriochlorophyll b. A helical membrane pass occupies residues 171–200 (NPAHMLAITFFFTTTLAMSMHGGLILSAAN). His-191 provides a ligand contact to Fe cation. Phe-217 serves as a coordination point for a ubiquinone. A helical transmembrane segment spans residues 226–252 (GSLGIHRLGLFLALSAAFWSAVCIVIS). His-231 lines the Fe cation pocket.

It belongs to the reaction center PufL/M/PsbA/D family. Reaction center is composed of four bacteriochlorophylls, two bacteriopheophytins, two ubiquinones, one iron, and three highly hydrophobic polypeptide chains (designated L, M, and H).

Its subcellular location is the cell inner membrane. Its function is as follows. The reaction center is a membrane-bound complex that mediates the initial photochemical event in the electron transfer process of photosynthesis. This chain is Reaction center protein L chain (pufL), found in Rubrivivax gelatinosus (strain NBRC 100245 / IL144).